The following is a 253-amino-acid chain: Probable glutathione transferase omega-2 (253 aa).

The 81-residue stretch at 25-105 folds into the GST N-terminal domain; that stretch reads GIYRIYNMRF…YLDDLFPESR (81 aa). Residue Cys35 is the Nucleophile of the active site. Glutathione contacts are provided by residues Lys62, Val75, and 89–90; that span reads ES. In terms of domain architecture, GST C-terminal spans 110–238; sequence DPYEKVQQKL…SQPTEMGVGF (129 aa).

The protein belongs to the GST superfamily. Omega family.

The enzyme catalyses RX + glutathione = an S-substituted glutathione + a halide anion + H(+). The catalysed reaction is L-dehydroascorbate + 2 glutathione = glutathione disulfide + L-ascorbate. It catalyses the reaction methylarsonate + 2 glutathione + H(+) = methylarsonous acid + glutathione disulfide + H2O. In terms of biological role, exhibits glutathione-dependent thiol transferase activity. Has dehydroascorbate reductase activity and may contribute to the recycling of ascorbic acid. Participates in the biotransformation of inorganic arsenic and reduces monomethylarsonic acid (MMA). The sequence is that of Probable glutathione transferase omega-2 from Caenorhabditis briggsae.